A 125-amino-acid chain; its full sequence is Small ribosomal subunit protein uS12 (125 aa).

Asp-89 is modified (3-methylthioaspartic acid).

It belongs to the universal ribosomal protein uS12 family. Part of the 30S ribosomal subunit. Contacts proteins S8 and S17. May interact with IF1 in the 30S initiation complex.

In terms of biological role, with S4 and S5 plays an important role in translational accuracy. Functionally, interacts with and stabilizes bases of the 16S rRNA that are involved in tRNA selection in the A site and with the mRNA backbone. Located at the interface of the 30S and 50S subunits, it traverses the body of the 30S subunit contacting proteins on the other side and probably holding the rRNA structure together. The combined cluster of proteins S8, S12 and S17 appears to hold together the shoulder and platform of the 30S subunit. This Clostridium acetobutylicum (strain ATCC 824 / DSM 792 / JCM 1419 / IAM 19013 / LMG 5710 / NBRC 13948 / NRRL B-527 / VKM B-1787 / 2291 / W) protein is Small ribosomal subunit protein uS12.